A 100-amino-acid chain; its full sequence is Large ribosomal subunit protein uL23 (100 aa).

It belongs to the universal ribosomal protein uL23 family. As to quaternary structure, part of the 50S ribosomal subunit. Contacts protein L29, and trigger factor when it is bound to the ribosome.

Its function is as follows. One of the early assembly proteins it binds 23S rRNA. One of the proteins that surrounds the polypeptide exit tunnel on the outside of the ribosome. Forms the main docking site for trigger factor binding to the ribosome. The sequence is that of Large ribosomal subunit protein uL23 from Idiomarina loihiensis (strain ATCC BAA-735 / DSM 15497 / L2-TR).